Reading from the N-terminus, the 85-residue chain is uncharacterized protein (85 aa).

Helical transmembrane passes span 16-34 and 50-71; these read WALS…CAYL and LSCI…KIIF.

This sequence to E.coli YhdT.

The protein resides in the cell membrane. This is an uncharacterized protein from Haemophilus influenzae (strain ATCC 51907 / DSM 11121 / KW20 / Rd).